The chain runs to 182 residues: Adenine phosphoribosyltransferase (182 aa).

Belongs to the purine/pyrimidine phosphoribosyltransferase family. In terms of assembly, homodimer.

The protein localises to the cytoplasm. The catalysed reaction is AMP + diphosphate = 5-phospho-alpha-D-ribose 1-diphosphate + adenine. Its pathway is purine metabolism; AMP biosynthesis via salvage pathway; AMP from adenine: step 1/1. Functionally, catalyzes a salvage reaction resulting in the formation of AMP, that is energically less costly than de novo synthesis. The polypeptide is Adenine phosphoribosyltransferase (Campylobacter jejuni subsp. jejuni serotype O:23/36 (strain 81-176)).